Consider the following 339-residue polypeptide: DNA-directed RNA polymerase subunit alpha (339 aa).

The tract at residues 1-233 (MVREEVAGST…DLFLPFLHAE (233 aa)) is alpha N-terminal domain (alpha-NTD). Residues 264–339 (KKGIPLNCIF…IDLLKNKLSF (76 aa)) form an alpha C-terminal domain (alpha-CTD) region.

It belongs to the RNA polymerase alpha chain family. In terms of assembly, in plastids the minimal PEP RNA polymerase catalytic core is composed of four subunits: alpha, beta, beta', and beta''. When a (nuclear-encoded) sigma factor is associated with the core the holoenzyme is formed, which can initiate transcription.

Its subcellular location is the plastid. The protein localises to the chloroplast. It carries out the reaction RNA(n) + a ribonucleoside 5'-triphosphate = RNA(n+1) + diphosphate. In terms of biological role, DNA-dependent RNA polymerase catalyzes the transcription of DNA into RNA using the four ribonucleoside triphosphates as substrates. In Psathyrostachys stoloniformis, this protein is DNA-directed RNA polymerase subunit alpha.